Consider the following 212-residue polypeptide: tRNA (guanine-N(7)-)-methyltransferase (212 aa).

S-adenosyl-L-methionine-binding residues include Glu44, Asp69, Asp96, and Asp118. Residue Asp118 is part of the active site. Substrate is bound at residue Lys122. An interaction with RNA region spans residues 124–129; it reads RHEKRR. Substrate is bound by residues Asp154 and 191–194; that span reads TEYE.

This sequence belongs to the class I-like SAM-binding methyltransferase superfamily. TrmB family.

The enzyme catalyses guanosine(46) in tRNA + S-adenosyl-L-methionine = N(7)-methylguanosine(46) in tRNA + S-adenosyl-L-homocysteine. It participates in tRNA modification; N(7)-methylguanine-tRNA biosynthesis. Its function is as follows. Catalyzes the formation of N(7)-methylguanine at position 46 (m7G46) in tRNA. This is tRNA (guanine-N(7)-)-methyltransferase from Streptococcus suis (strain 05ZYH33).